The following is a 672-amino-acid chain: DNA ligase (672 aa).

Residues 35–39 (DAQYD), 84–85 (SL), and Glu115 each bind NAD(+). Residue Lys117 is the N6-AMP-lysine intermediate of the active site. Arg138, Glu178, Lys294, and Lys318 together coordinate NAD(+). The Zn(2+) site is built by Cys412, Cys415, Cys430, and Cys435. One can recognise a BRCT domain in the interval 592–672 (ATGGPFVGKS…AFLQMLQTNA (81 aa)).

This sequence belongs to the NAD-dependent DNA ligase family. LigA subfamily. Mg(2+) serves as cofactor. Requires Mn(2+) as cofactor.

The enzyme catalyses NAD(+) + (deoxyribonucleotide)n-3'-hydroxyl + 5'-phospho-(deoxyribonucleotide)m = (deoxyribonucleotide)n+m + AMP + beta-nicotinamide D-nucleotide.. In terms of biological role, DNA ligase that catalyzes the formation of phosphodiester linkages between 5'-phosphoryl and 3'-hydroxyl groups in double-stranded DNA using NAD as a coenzyme and as the energy source for the reaction. It is essential for DNA replication and repair of damaged DNA. The polypeptide is DNA ligase (Myxococcus xanthus (strain DK1622)).